A 230-amino-acid chain; its full sequence is Cytochrome c oxidase subunit 2 (230 aa).

Residues 1-14 lie on the Mitochondrial intermembrane side of the membrane; the sequence is MAHPSQLGFQDAAS. The helical transmembrane segment at 15-45 threads the bilayer; it reads PVMEELLHFHDHALMIVLLISTLVLYIIVAM. Residues 46-59 are Mitochondrial matrix-facing; sequence VSTKLTNMYILDSQ. A helical transmembrane segment spans residues 60–87; sequence EIEIVWTVLPAVILILIALPSLRILYLM. Residues 88–230 are Mitochondrial intermembrane-facing; the sequence is DEINDPHLTI…KWSTMMLEDA (143 aa). Positions 161, 196, 198, 200, 204, and 207 each coordinate Cu cation. Glu198 contributes to the Mg(2+) binding site.

Belongs to the cytochrome c oxidase subunit 2 family. In terms of assembly, component of the cytochrome c oxidase (complex IV, CIV), a multisubunit enzyme composed of 14 subunits. The complex is composed of a catalytic core of 3 subunits MT-CO1, MT-CO2 and MT-CO3, encoded in the mitochondrial DNA, and 11 supernumerary subunits COX4I, COX5A, COX5B, COX6A, COX6B, COX6C, COX7A, COX7B, COX7C, COX8 and NDUFA4, which are encoded in the nuclear genome. The complex exists as a monomer or a dimer and forms supercomplexes (SCs) in the inner mitochondrial membrane with NADH-ubiquinone oxidoreductase (complex I, CI) and ubiquinol-cytochrome c oxidoreductase (cytochrome b-c1 complex, complex III, CIII), resulting in different assemblies (supercomplex SCI(1)III(2)IV(1) and megacomplex MCI(2)III(2)IV(2)). Found in a complex with TMEM177, COA6, COX18, COX20, SCO1 and SCO2. Interacts with TMEM177 in a COX20-dependent manner. Interacts with COX20. Interacts with COX16. Cu cation is required as a cofactor.

It is found in the mitochondrion inner membrane. It catalyses the reaction 4 Fe(II)-[cytochrome c] + O2 + 8 H(+)(in) = 4 Fe(III)-[cytochrome c] + 2 H2O + 4 H(+)(out). Functionally, component of the cytochrome c oxidase, the last enzyme in the mitochondrial electron transport chain which drives oxidative phosphorylation. The respiratory chain contains 3 multisubunit complexes succinate dehydrogenase (complex II, CII), ubiquinol-cytochrome c oxidoreductase (cytochrome b-c1 complex, complex III, CIII) and cytochrome c oxidase (complex IV, CIV), that cooperate to transfer electrons derived from NADH and succinate to molecular oxygen, creating an electrochemical gradient over the inner membrane that drives transmembrane transport and the ATP synthase. Cytochrome c oxidase is the component of the respiratory chain that catalyzes the reduction of oxygen to water. Electrons originating from reduced cytochrome c in the intermembrane space (IMS) are transferred via the dinuclear copper A center (CU(A)) of subunit 2 and heme A of subunit 1 to the active site in subunit 1, a binuclear center (BNC) formed by heme A3 and copper B (CU(B)). The BNC reduces molecular oxygen to 2 water molecules using 4 electrons from cytochrome c in the IMS and 4 protons from the mitochondrial matrix. The chain is Cytochrome c oxidase subunit 2 (mt-co2) from Oncorhynchus mykiss (Rainbow trout).